Here is a 900-residue protein sequence, read N- to C-terminus: 3'-5' exonuclease DinG (900 aa).

In terms of domain architecture, Exonuclease spans 8-161 (VVDLETTGNQ…DEDATTTALL (154 aa)). In terms of domain architecture, Helicase ATP-binding spans 241 to 496 (SEVVKSLNLT…KAIDKLEQQR (256 aa)). 276–283 (APLGSGKS) is a binding site for ATP. The DEAH box signature appears at 448 to 451 (DEAH). Residues 713 to 893 (DYIQEYVTIT…QFSKLVNKIQ (181 aa)) form the Helicase C-terminal domain.

Belongs to the helicase family. DinG subfamily. Type 2 sub-subfamily.

Functionally, 3'-5' exonuclease. This Staphylococcus haemolyticus (strain JCSC1435) protein is 3'-5' exonuclease DinG.